The chain runs to 159 residues: Phosphopantetheine adenylyltransferase (159 aa).

T10 is a substrate binding site. Residues T10–F11 and H18 each bind ATP. K42, M74, and R88 together coordinate substrate. ATP contacts are provided by residues G89–R91, E99, and W124–S130.

It belongs to the bacterial CoaD family. In terms of assembly, homohexamer. Mg(2+) serves as cofactor.

The protein resides in the cytoplasm. The enzyme catalyses (R)-4'-phosphopantetheine + ATP + H(+) = 3'-dephospho-CoA + diphosphate. Its pathway is cofactor biosynthesis; coenzyme A biosynthesis; CoA from (R)-pantothenate: step 4/5. Its function is as follows. Reversibly transfers an adenylyl group from ATP to 4'-phosphopantetheine, yielding dephospho-CoA (dPCoA) and pyrophosphate. This Escherichia fergusonii (strain ATCC 35469 / DSM 13698 / CCUG 18766 / IAM 14443 / JCM 21226 / LMG 7866 / NBRC 102419 / NCTC 12128 / CDC 0568-73) protein is Phosphopantetheine adenylyltransferase.